We begin with the raw amino-acid sequence, 7388 residues long: Microtubule-actin cross-linking factor 1, isoforms 1/2/3/4/5 (7388 aa).

The interval Met1 to Leu47 is disordered. The actin-binding stretch occupies residues Met1–Asp295. Ser4 carries the phosphoserine modification. A compositionally biased stretch (basic and acidic residues) spans Leu9 to Arg30. A phosphoserine mark is found at Ser35 and Ser57. Calponin-homology (CH) domains follow at residues Arg78 to Gln181 and Met194 to Pro298. LRR repeat units lie at residues Gln148–Gly171 and Leu240–Arg264. Position 280 is a phosphoserine (Ser280). LRR repeat units lie at residues Leu377–Asn399 and Leu441–Gly464. The residue at position 814 (Ser814) is a Phosphoserine. An SH3 domain is found at Lys868–Pro925. One copy of the LRR 5 repeat lies at Ile1050–Ser1073. Ser1122 carries the phosphoserine modification. 3 LRR repeats span residues Val1128 to Asn1154, Leu1187 to Lys1210, and His1257 to Ala1282. Phosphoserine occurs at positions 1367 and 1376. 5 Plectin repeats span residues Leu1577 to Gln1621, Leu1654 to Ser1696, Arg1769 to Leu1809, Arg1811 to Glu1848, and Gly1855 to Ser1886. Phosphoserine occurs at positions 2006 and 2051. The interval Ser2051–Asp2085 is disordered. The span at Glu2055–Val2072 shows a compositional bias: basic and acidic residues. Ser2077 is subject to Phosphoserine. Plectin repeat units lie at residues Leu2290–Glu2332, Asn2367–Gln2410, Val2411–Asp2437, Arg2501–Val2543, Glu2581–Glu2612, and Leu2686–Gln2730. Disordered regions lie at residues Glu3013–Ala3034 and Ser3104–Lys3174. The span at Glu3115–Gly3124 shows a compositional bias: basic and acidic residues. Ser3122 carries the phosphoserine modification. The segment covering Thr3129 to Ser3158 has biased composition (polar residues). LRR repeat units follow at residues Leu3239–Asp3262 and Val3264–Gly3283. Residues Glu3321–Pro3332 are compositionally biased toward basic and acidic residues. The disordered stretch occupies residues Glu3321–Gly3350. Residue Ser3331 is modified to Phosphoserine. LRR repeat units follow at residues Gln3646–Arg3669 and Leu3696–Ala3720. Spectrin repeat units lie at residues Glu3883–Lys3957 and Gln4000–Gln4108. The residue at position 3927 (Ser3927) is a Phosphoserine. The LRR 13 repeat unit spans residues Lys3936–Glu3958. LRR repeat units lie at residues Leu4125–Glu4150 and Ile4261–Ser4287. A Spectrin 3 repeat occupies Arg4466–Glu4574. 3 positions are modified to phosphoserine: Ser4495, Ser4496, and Ser4521. 3 LRR repeats span residues Lys4511–Leu4534, Gly4601–Leu4624, and Lys4769–Arg4792. Spectrin repeat units lie at residues Thr4800–Lys4904 and Lys4909–Glu5012. Phosphoserine is present on residues Ser4836 and Ser4962. LRR repeat units follow at residues Asn5051–Asn5076, Asn5172–Glu5194, and Lys5281–Ser5304. 3 Spectrin repeats span residues Glu5236 to Glu5341, Lys5348 to Asp5450, and Ala5455 to Leu5557. Thr5435 carries the post-translational modification Phosphothreonine. Residues Glu5583–Gln5603 form a disordered region. Polar residues predominate over residues Ser5588 to Gln5603. LRR repeat units lie at residues Met5695–Ile5719 and Ala5804–Glu5828. 9 Spectrin repeats span residues Asn5783–Glu5885, Leu6005–Asp6110, Ala6115–Glu6219, Leu6225–Gln6328, Gln6333–Glu6439, Leu6443–Asp6547, Arg6552–Glu6658, Gln6665–Gln6766, and Ala6771–Glu6874. Phosphoserine is present on residues Ser5808 and Ser6032. Residue Lys6210 is modified to N6-acetyllysine. One copy of the LRR 24 repeat lies at Arg6496–Val6519. Positions Pro6951 to Gln6981 are disordered. Ser6967 is subject to Phosphoserine. EF-hand domains lie at His7041–Pro7076 and Thr7077–Ala7112. Positions 7054, 7056, 7058, 7060, 7065, 7090, 7092, 7094, 7096, and 7101 each coordinate Ca(2+). The 73-residue stretch at Thr7117–Arg7189 folds into the GAR domain. The tract at residues Thr7117–Arg7388 is C-terminal tail. A disordered region spans residues Pro7205–Arg7388. Residues Ser7225–Thr7259 show a composition bias toward low complexity. Thr7254 carries the phosphothreonine modification. Positions Thr7275–Lys7299 are enriched in polar residues. Phosphoserine occurs at positions 7279 and 7292. Positions Ser7310–Ala7324 are enriched in low complexity. A 4 X 4 AA tandem repeats of [GS]-S-R-[AR] region spans residues Gly7313–Arg7328. Phosphoserine is present on residues Ser7330 and Ser7333. A compositionally biased stretch (polar residues) spans Glu7339–Arg7361.

This sequence belongs to the plakin or cytolinker family. In terms of assembly, isoform 2: Interacts with MAPRE1, CLASP1, CLASP2, AXIN1 and LRP6. Isoform 2: Found in a complex composed of MACF1, APC, AXIN1, CTNNB1 and GSK3B. Isoform 2: Interacts with GOLGA4. Isoform 2: Interacts with CAMSAP3. In terms of processing, phosphorylated on serine residues in the C-terminal tail by GSK3B. Phosphorylation inhibits microtubule-binding and this plays a critical role in bulge stem cell migration and skin wound repair. Wnt-signaling can repress phosphorylation. As to expression, isoform 2: Ubiquitously expressed. Isoform 1: Expressed in cell lines NCI-H460, A-549 and HaCaT. Isoform 4: Expressed in heart, lung, pituitary and placenta, not found in brain, kidney, liver, pancreas or skeletal muscle.

Its subcellular location is the cytoplasm. It localises to the cytoskeleton. The protein localises to the golgi apparatus. The protein resides in the cell membrane. It is found in the cell projection. Its subcellular location is the ruffle membrane. Its function is as follows. F-actin-binding protein which plays a role in cross-linking actin to other cytoskeletal proteins and also binds to microtubules. Plays an important role in ERBB2-dependent stabilization of microtubules at the cell cortex. Acts as a positive regulator of Wnt receptor signaling pathway and is involved in the translocation of AXIN1 and its associated complex (composed of APC, CTNNB1 and GSK3B) from the cytoplasm to the cell membrane. Has actin-regulated ATPase activity and is essential for controlling focal adhesions (FAs) assembly and dynamics. Interaction with CAMSAP3 at the minus ends of non-centrosomal microtubules tethers microtubules minus-ends to actin filaments, regulating focal adhesion size and cell migration. May play role in delivery of transport vesicles containing GPI-linked proteins from the trans-Golgi network through its interaction with GOLGA4. Plays a key role in wound healing and epidermal cell migration. Required for efficient upward migration of bulge cells in response to wounding and this function is primarily rooted in its ability to coordinate microtubule dynamics and polarize hair follicle stem cells. As a regulator of actin and microtubule arrangement and stabilization, it plays an essential role in neurite outgrowth, branching and spine formation during brain development. This is Microtubule-actin cross-linking factor 1, isoforms 1/2/3/4/5 from Homo sapiens (Human).